The primary structure comprises 288 residues: MKTVSQISELRAQVKAWRQQGLTVAFVPTMGNLHAGHISLVAEAHKHADKVVASIFVNPMQFGVNEDIENYPRTMINDEQKLTAAGTDLLFTPSPDIIYPKGLAKQSFVEVPNISDGYCGESRPGHFRGVATIVCKLFNLVQPDVACFGLKDYQQVQVIQRMVEDLSMPITIIPVATIREESGLALSSRNGYLTEEEKAIAPALHQSLHWLGEQIRAGYAQQDSIDFIGLAKHAAKTINDAGLHTDYLHVCHAETLQPASEDDTQLVILAAAHCGKARLIDNLQVNLA.

30–37 (MGNLHAGH) provides a ligand contact to ATP. H37 (proton donor) is an active-site residue. Q61 lines the (R)-pantoate pocket. Q61 lines the beta-alanine pocket. An ATP-binding site is contributed by 149-152 (GLKD). Q155 is a (R)-pantoate binding site. ATP-binding positions include I178 and 186–189 (LSSR).

It belongs to the pantothenate synthetase family. In terms of assembly, homodimer.

It is found in the cytoplasm. The enzyme catalyses (R)-pantoate + beta-alanine + ATP = (R)-pantothenate + AMP + diphosphate + H(+). The protein operates within cofactor biosynthesis; (R)-pantothenate biosynthesis; (R)-pantothenate from (R)-pantoate and beta-alanine: step 1/1. Catalyzes the condensation of pantoate with beta-alanine in an ATP-dependent reaction via a pantoyl-adenylate intermediate. This chain is Pantothenate synthetase, found in Colwellia psychrerythraea (strain 34H / ATCC BAA-681) (Vibrio psychroerythus).